Consider the following 346-residue polypeptide: MRVAVDAMGGDNAPVVEVEGAVAAAGEFGIPVTLVGDTDRVNQELAKYNCKGLDITVKHASEVVGMHDSASDAVRKKKDSSIRVAFDLVKNDEAVAVVSAGNSGATMAAGMFVLKRLKGIDRPAIAQIFPTLRGKTLVLDVGGNVDCKPLHLVQFAIMGEVYARFVMGVDNPRIGLLSNGEEESKGNDLTRETSALLKNTSLDYFGYVEGRDIFNGIVDVVVCDGFVGNVVLKLSEGLAEAVGKMLKDEIKQSLLSKIGYLLSRKAFVNFKKKVDYSEYGGAPLLGIDGVGMICHGGSNAKAIKNAIRFAHEYAQKGVNQRMAEKLQENYPLYMQQLEMLKVQAAG.

This sequence belongs to the PlsX family. Homodimer. Probably interacts with PlsY.

It localises to the cytoplasm. It carries out the reaction a fatty acyl-[ACP] + phosphate = an acyl phosphate + holo-[ACP]. The protein operates within lipid metabolism; phospholipid metabolism. In terms of biological role, catalyzes the reversible formation of acyl-phosphate (acyl-PO(4)) from acyl-[acyl-carrier-protein] (acyl-ACP). This enzyme utilizes acyl-ACP as fatty acyl donor, but not acyl-CoA. The polypeptide is Phosphate acyltransferase (Geotalea uraniireducens (strain Rf4) (Geobacter uraniireducens)).